A 184-amino-acid chain; its full sequence is ATP synthase subunit delta (184 aa).

It belongs to the ATPase delta chain family. As to quaternary structure, F-type ATPases have 2 components, F(1) - the catalytic core - and F(0) - the membrane proton channel. F(1) has five subunits: alpha(3), beta(3), gamma(1), delta(1), epsilon(1). F(0) has three main subunits: a(1), b(2) and c(10-14). The alpha and beta chains form an alternating ring which encloses part of the gamma chain. F(1) is attached to F(0) by a central stalk formed by the gamma and epsilon chains, while a peripheral stalk is formed by the delta and b chains.

It localises to the cell inner membrane. Functionally, f(1)F(0) ATP synthase produces ATP from ADP in the presence of a proton or sodium gradient. F-type ATPases consist of two structural domains, F(1) containing the extramembraneous catalytic core and F(0) containing the membrane proton channel, linked together by a central stalk and a peripheral stalk. During catalysis, ATP synthesis in the catalytic domain of F(1) is coupled via a rotary mechanism of the central stalk subunits to proton translocation. Its function is as follows. This protein is part of the stalk that links CF(0) to CF(1). It either transmits conformational changes from CF(0) to CF(1) or is implicated in proton conduction. The protein is ATP synthase subunit delta of Rickettsia peacockii (strain Rustic).